Consider the following 363-residue polypeptide: 3-dehydroquinate synthase (363 aa).

NAD(+) contacts are provided by residues 134-135 (TT), Lys-147, Lys-156, and 174-177 (TLKT). Residues Glu-189, His-254, and His-271 each coordinate Zn(2+).

The protein belongs to the sugar phosphate cyclases superfamily. Dehydroquinate synthase family. Requires Co(2+) as cofactor. It depends on Zn(2+) as a cofactor. NAD(+) is required as a cofactor.

Its subcellular location is the cytoplasm. The enzyme catalyses 7-phospho-2-dehydro-3-deoxy-D-arabino-heptonate = 3-dehydroquinate + phosphate. The protein operates within metabolic intermediate biosynthesis; chorismate biosynthesis; chorismate from D-erythrose 4-phosphate and phosphoenolpyruvate: step 2/7. Catalyzes the conversion of 3-deoxy-D-arabino-heptulosonate 7-phosphate (DAHP) to dehydroquinate (DHQ). In Prochlorococcus marinus (strain MIT 9515), this protein is 3-dehydroquinate synthase.